The chain runs to 143 residues: Putative glycerol transporter Lin0368 (143 aa).

4 helical membrane-spanning segments follow: residues 6–26 (GMIG…PLAE), 27–47 (NYGI…MWFM), 60–80 (AAFV…DVFM), and 90–110 (LPTI…AAAI). Residues 118–143 (HEAKQEKTEPGMNIKEEERLNENQLV) are disordered.

The protein resides in the membrane. In terms of biological role, could be involved in the glycerol uptake either via facilitated diffusion or active transport. The protein is Putative glycerol transporter Lin0368 of Listeria innocua serovar 6a (strain ATCC BAA-680 / CLIP 11262).